The following is a 56-amino-acid chain: Large ribosomal subunit protein bL32 (56 aa).

The tract at residues 1 to 40 (MAVQQNKKSRSKRGMRRSHDSLGTAQLSVDATSGELHRRH) is disordered. Positions 7–16 (KKSRSKRGMR) are enriched in basic residues. Over residues 21 to 31 (SLGTAQLSVDA) the composition is skewed to polar residues.

This sequence belongs to the bacterial ribosomal protein bL32 family.

The sequence is that of Large ribosomal subunit protein bL32 from Shewanella halifaxensis (strain HAW-EB4).